The primary structure comprises 122 residues: Large ribosomal subunit protein uL14 (122 aa).

This sequence belongs to the universal ribosomal protein uL14 family. In terms of assembly, part of the 50S ribosomal subunit. Forms a cluster with proteins L3 and L19. In the 70S ribosome, L14 and L19 interact and together make contacts with the 16S rRNA in bridges B5 and B8.

In terms of biological role, binds to 23S rRNA. Forms part of two intersubunit bridges in the 70S ribosome. The protein is Large ribosomal subunit protein uL14 of Paraburkholderia phymatum (strain DSM 17167 / CIP 108236 / LMG 21445 / STM815) (Burkholderia phymatum).